The primary structure comprises 198 residues: Recombination protein RecR (198 aa).

The C4-type zinc finger occupies 57–72 (CAMCNTFTEHEVCETC). In terms of domain architecture, Toprim spans 80–175 (ALLCVVETPG…KVSRLARGVP (96 aa)).

Belongs to the RecR family.

Functionally, may play a role in DNA repair. It seems to be involved in an RecBC-independent recombinational process of DNA repair. It may act with RecF and RecO. The sequence is that of Recombination protein RecR from Janthinobacterium sp. (strain Marseille) (Minibacterium massiliensis).